We begin with the raw amino-acid sequence, 873 residues long: Probable beta-glucosidase A (873 aa).

Positions 1-19 (MRFGWLEVAALTAASVANA) are cleaved as a signal peptide. 3 N-linked (GlcNAc...) asparagine glycosylation sites follow: N71, N222, and N263. The active site involves D291. N-linked (GlcNAc...) asparagine glycosylation is found at N326, N333, N365, N453, N534, N553, N575, N679, and N725. The disordered stretch occupies residues 731 to 764 (DSSDDPNYGWEDSEYIPEGARDGSPQPLLKAGGA).

It belongs to the glycosyl hydrolase 3 family.

It is found in the secreted. The catalysed reaction is Hydrolysis of terminal, non-reducing beta-D-glucosyl residues with release of beta-D-glucose.. The protein operates within glycan metabolism; cellulose degradation. Functionally, beta-glucosidases are one of a number of cellulolytic enzymes involved in the degradation of cellulosic biomass. Catalyzes the last step releasing glucose from the inhibitory cellobiose. The sequence is that of Probable beta-glucosidase A (bglA) from Aspergillus fumigatus (strain CBS 144.89 / FGSC A1163 / CEA10) (Neosartorya fumigata).